We begin with the raw amino-acid sequence, 291 residues long: ATP synthase gamma chain (291 aa).

Belongs to the ATPase gamma chain family. As to quaternary structure, F-type ATPases have 2 components, CF(1) - the catalytic core - and CF(0) - the membrane proton channel. CF(1) has five subunits: alpha(3), beta(3), gamma(1), delta(1), epsilon(1). CF(0) has three main subunits: a, b and c.

The protein localises to the cell inner membrane. Its function is as follows. Produces ATP from ADP in the presence of a proton gradient across the membrane. The gamma chain is believed to be important in regulating ATPase activity and the flow of protons through the CF(0) complex. The chain is ATP synthase gamma chain from Ruegeria sp. (strain TM1040) (Silicibacter sp.).